A 993-amino-acid chain; its full sequence is Ephrin type-A receptor 7 (993 aa).

An N-terminal signal peptide occupies residues 1–27 (MVLRSRLPPWIMLCSVWLLRFAHTGEA). The Extracellular portion of the chain corresponds to 28–550 (QAAKEVILLD…TAVSSEQNPV (523 aa)). The region spanning 32–210 (EVILLDSKAQ…YYKKCWSIIE (179 aa)) is the Eph LBD domain. Fibronectin type-III domains are found at residues 331-441 (PPSA…TGQA) and 442-537 (APSQ…TLEE). N-linked (GlcNAc...) asparagine glycosylation is found at Asn-343 and Asn-410. A helical transmembrane segment spans residues 551–571 (IIIAVVAVAGTIILVFMVFGF). Residues 572–993 (IIGRRHCGYS…LHLHGTGIQV (422 aa)) are Cytoplasmic-facing. A phosphotyrosine; by autocatalysis mark is found at Tyr-603 and Tyr-609. Positions 628 to 889 (IKIERVIGAG…QIVGILDKMI (262 aa)) constitute a Protein kinase domain. Residues 634–642 (IGAGEFGEV) and Lys-660 contribute to the ATP site. Catalysis depends on Asp-753, which acts as the Proton acceptor. 2 positions are modified to phosphotyrosine; by autocatalysis: Tyr-786 and Tyr-935. An SAM domain is found at 918 to 982 (TTFCSVGEWL…MSSIQTMRAQ (65 aa)). The PDZ-binding motif lies at 991-993 (IQV).

This sequence belongs to the protein kinase superfamily. Tyr protein kinase family. Ephrin receptor subfamily. As to quaternary structure, heterotetramer upon binding of the ligand. The heterotetramer is composed of an ephrin dimer and a receptor dimer. Oligomerization is probably required to induce biological responses. Post-translationally, phosphorylated.

The protein resides in the cell membrane. The enzyme catalyses L-tyrosyl-[protein] + ATP = O-phospho-L-tyrosyl-[protein] + ADP + H(+). Receptor tyrosine kinase which binds promiscuously GPI-anchored ephrin-A family ligands residing on adjacent cells, leading to contact-dependent bidirectional signaling into neighboring cells. The signaling pathway downstream of the receptor is referred to as forward signaling while the signaling pathway downstream of the ephrin ligand is referred to as reverse signaling. Among GPI-anchored ephrin-A ligands, EFNA5 is a cognate/functional ligand for EPHA7 and their interaction regulates brain development modulating cell-cell adhesion and repulsion. Has a repellent activity on axons and is for instance involved in the guidance of corticothalamic axons and in the proper topographic mapping of retinal axons to the colliculus. May also regulate brain development through a caspase(CASP3)-dependent proapoptotic activity. Forward signaling may result in activation of components of the ERK signaling pathway including MAP2K1, MAP2K2, MAPK1 and MAPK3 which are phosphorylated upon activation of EPHA7. The protein is Ephrin type-A receptor 7 (EPHA7) of Gallus gallus (Chicken).